The following is a 215-amino-acid chain: Adenylate kinase (215 aa).

ATP is bound at residue 10–15; sequence GAGKGT. An NMP region spans residues 30–59; it reads STGDIFRANISGKTELGMKAKGYMDKGLLV. AMP is bound by residues Thr31, Arg36, 57 to 59, 85 to 88, and Gln92; these read LLV and GFPR. An LID region spans residues 126–163; the sequence is GRRVCSKCGASYHIEYNPTKVEGICDLCGSPVVQRKDD. Arg127 lines the ATP pocket. Zn(2+) is bound by residues Cys130 and Cys133. 136–137 is an ATP binding site; sequence SY. Zn(2+) is bound by residues Cys150 and Cys153. Residues Arg160 and Arg171 each coordinate AMP. Gln199 contributes to the ATP binding site.

The protein belongs to the adenylate kinase family. Monomer.

The protein resides in the cytoplasm. It catalyses the reaction AMP + ATP = 2 ADP. It functions in the pathway purine metabolism; AMP biosynthesis via salvage pathway; AMP from ADP: step 1/1. Catalyzes the reversible transfer of the terminal phosphate group between ATP and AMP. Plays an important role in cellular energy homeostasis and in adenine nucleotide metabolism. In Clostridium acetobutylicum (strain ATCC 824 / DSM 792 / JCM 1419 / IAM 19013 / LMG 5710 / NBRC 13948 / NRRL B-527 / VKM B-1787 / 2291 / W), this protein is Adenylate kinase.